We begin with the raw amino-acid sequence, 258 residues long: Short-chain dehydrogenase/reductase aba4 (258 aa).

Positions 20, 66, and 130 each coordinate NADP(+). Residues Ser-146 and Tyr-160 each act as proton donor in the active site. NADP(+) contacts are provided by Tyr-160, Lys-164, Ile-193, and Thr-195. Lys-164 serves as the catalytic Lowers pKa of active site Tyr.

It belongs to the short-chain dehydrogenases/reductases (SDR) family.

The protein operates within hormone biosynthesis. Functionally, short-chain dehydrogenase/reductase; part of the gene cluster that mediates the biosynthesis of abscisic acid (ABA), a phytohormone that acts antagonistically toward salicylic acid (SA), jasmonic acid (JA) and ethylene (ETH) signaling, to impede plant defense responses. The first step of the pathway catalyzes the reaction from farnesyl diphosphate to alpha-ionylideneethane performed by the alpha-ionylideneethane synthase aba3 via a three-step reaction mechanism involving 2 neutral intermediates, beta-farnesene and allofarnesene. The cytochrome P450 monooxygenase aba1 might then be involved in the conversion of alpha-ionylideneethane to alpha-ionylideneacetic acid. Alpha-ionylideneacetic acid is further converted to abscisic acid in 2 steps involving the cytochrome P450 monooxygenase aba2 and the short-chain dehydrogenase/reductase aba4, via the intermediates 1'-deoxy-ABA or 1',4'-trans-diol-ABA, depending on the order of action of these 2 enzymes. Aba2 is responsible for the hydroxylation of carbon atom C-1' and aba4 might be involved in the oxidation of the C-4' carbon atom. This is Short-chain dehydrogenase/reductase aba4 from Botryotinia fuckeliana (strain B05.10) (Noble rot fungus).